The chain runs to 258 residues: GPI alpha-1,4-mannosyltransferase I, stabilizing subunit (258 aa).

Residues 1 to 21 (MAARVAAVRAAAWLLLGAATG) form the signal peptide. Over 22 to 230 (LTRGPAAAFT…PVGLTVHTSL (209 aa)) the chain is Lumenal. A glycan (N-linked (GlcNAc...) asparagine) is linked at Asn103. A helical transmembrane segment spans residues 231–251 (VCSVTLLITILCSTLILVAVF). Residues 252 to 258 (KYGHFSL) are Cytoplasmic-facing.

The protein belongs to the PIGX family. In terms of assembly, part of the glycosylphosphatidylinositol-mannosyltransferase I complex that is composed of PIGM and PIGX. Interacts with PIGM; PIGX stabilizes PIGM.

It is found in the endoplasmic reticulum membrane. The protein operates within glycolipid biosynthesis; glycosylphosphatidylinositol-anchor biosynthesis. In terms of biological role, stabilizing subunit of the glycosylphosphatidylinositol-mannosyltransferase I complex which catalyzes the transfer of the first mannose, via an alpha-1,4 bond from a dolichol-phosphate-mannose (Dol-P-Man) to the glucosaminyl acyl phosphatidylinositol (GlcN-(acyl)PI) intermediate to generate alpha-D-Man-(1-&gt;4)-alpha-D-GlcN-(1-&gt;6)-(1-radyl,2-acyl-sn-glycero-3-phospho)-2-acyl-inositol and participates in the sixth step of the glycosylphosphatidylinositol-anchor biosynthesis. Probably acts by stabilizing the mannosyltransferase PIGM. The protein is GPI alpha-1,4-mannosyltransferase I, stabilizing subunit of Homo sapiens (Human).